A 255-amino-acid polypeptide reads, in one-letter code: 5-oxoprolinase subunit A (255 aa).

It belongs to the LamB/PxpA family. In terms of assembly, forms a complex composed of PxpA, PxpB and PxpC.

It catalyses the reaction 5-oxo-L-proline + ATP + 2 H2O = L-glutamate + ADP + phosphate + H(+). In terms of biological role, catalyzes the cleavage of 5-oxoproline to form L-glutamate coupled to the hydrolysis of ATP to ADP and inorganic phosphate. This Campylobacter jejuni subsp. jejuni serotype O:6 (strain 81116 / NCTC 11828) protein is 5-oxoprolinase subunit A.